The following is a 596-amino-acid chain: Elongation factor 4 (596 aa).

In terms of domain architecture, tr-type G spans 2–183 (ENIRNFSIIA…AIIKRIPAPK (182 aa)). GTP contacts are provided by residues 14–19 (DHGKST) and 130–133 (NKID).

This sequence belongs to the TRAFAC class translation factor GTPase superfamily. Classic translation factor GTPase family. LepA subfamily.

Its subcellular location is the cell inner membrane. The catalysed reaction is GTP + H2O = GDP + phosphate + H(+). In terms of biological role, required for accurate and efficient protein synthesis under certain stress conditions. May act as a fidelity factor of the translation reaction, by catalyzing a one-codon backward translocation of tRNAs on improperly translocated ribosomes. Back-translocation proceeds from a post-translocation (POST) complex to a pre-translocation (PRE) complex, thus giving elongation factor G a second chance to translocate the tRNAs correctly. Binds to ribosomes in a GTP-dependent manner. This chain is Elongation factor 4, found in Campylobacter hominis (strain ATCC BAA-381 / DSM 21671 / CCUG 45161 / LMG 19568 / NCTC 13146 / CH001A).